The following is a 171-amino-acid chain: 3-hydroxydecanoyl-[acyl-carrier-protein] dehydratase (171 aa).

The active site involves H70.

It belongs to the thioester dehydratase family. FabA subfamily. Homodimer.

It is found in the cytoplasm. It catalyses the reaction a (3R)-hydroxyacyl-[ACP] = a (2E)-enoyl-[ACP] + H2O. The catalysed reaction is (3R)-hydroxydecanoyl-[ACP] = (2E)-decenoyl-[ACP] + H2O. It carries out the reaction (2E)-decenoyl-[ACP] = (3Z)-decenoyl-[ACP]. The protein operates within lipid metabolism; fatty acid biosynthesis. Necessary for the introduction of cis unsaturation into fatty acids. Catalyzes the dehydration of (3R)-3-hydroxydecanoyl-ACP to E-(2)-decenoyl-ACP and then its isomerization to Z-(3)-decenoyl-ACP. Can catalyze the dehydratase reaction for beta-hydroxyacyl-ACPs with saturated chain lengths up to 16:0, being most active on intermediate chain length. The sequence is that of 3-hydroxydecanoyl-[acyl-carrier-protein] dehydratase from Xanthomonas campestris pv. campestris (strain 8004).